A 137-amino-acid chain; its full sequence is Altered inheritance of mitochondria protein 11 (137 aa).

The next 2 helical transmembrane spans lie at 20-37 and 66-88; these read YGAAAFTLITMRLISRAI and LTYASAASIGTFSTLIFGFCWAL.

This sequence belongs to the AIM11 family.

It is found in the membrane. The sequence is that of Altered inheritance of mitochondria protein 11 (AIM11) from Saccharomyces cerevisiae (strain RM11-1a) (Baker's yeast).